Consider the following 230-residue polypeptide: 2-C-methyl-D-erythritol 4-phosphate cytidylyltransferase (230 aa).

It belongs to the IspD/TarI cytidylyltransferase family. IspD subfamily.

The catalysed reaction is 2-C-methyl-D-erythritol 4-phosphate + CTP + H(+) = 4-CDP-2-C-methyl-D-erythritol + diphosphate. It functions in the pathway isoprenoid biosynthesis; isopentenyl diphosphate biosynthesis via DXP pathway; isopentenyl diphosphate from 1-deoxy-D-xylulose 5-phosphate: step 2/6. Catalyzes the formation of 4-diphosphocytidyl-2-C-methyl-D-erythritol from CTP and 2-C-methyl-D-erythritol 4-phosphate (MEP). In Shewanella halifaxensis (strain HAW-EB4), this protein is 2-C-methyl-D-erythritol 4-phosphate cytidylyltransferase.